The sequence spans 86 residues: Selenoprotein W (86 aa).

Positions 10–13 form a cross-link, cysteinyl-selenocysteine (Cys-Sec); redox-active; it reads CGGU. Residue Sec-13 is a non-standard amino acid, selenocysteine.

Belongs to the SelWTH family. Selenoprotein W subfamily.

The protein localises to the cytoplasm. Functionally, plays a role as a glutathione (GSH)-dependent antioxidant. May be involved in a redox-related process. May play a role in the myopathies of selenium deficiency. This chain is Selenoprotein W, found in Danio rerio (Zebrafish).